Here is a 286-residue protein sequence, read N- to C-terminus: 4-hydroxybenzoate octaprenyltransferase (286 aa).

Helical transmembrane passes span 20–40 (IGTL…AGGM), 43–63 (LKVL…GCII), 96–116 (LFVI…GLVV), 142–162 (FLGV…TGEV), 167–187 (WWLF…YAMV), 210–230 (QIIG…GWSA), 235–255 (VYGL…MLIF), and 266–286 (FLNN…DYLF).

This sequence belongs to the UbiA prenyltransferase family. The cofactor is Mg(2+).

Its subcellular location is the cell inner membrane. It carries out the reaction all-trans-octaprenyl diphosphate + 4-hydroxybenzoate = 4-hydroxy-3-(all-trans-octaprenyl)benzoate + diphosphate. Its pathway is cofactor biosynthesis; ubiquinone biosynthesis. Catalyzes the prenylation of para-hydroxybenzoate (PHB) with an all-trans polyprenyl group. Mediates the second step in the final reaction sequence of ubiquinone-8 (UQ-8) biosynthesis, which is the condensation of the polyisoprenoid side chain with PHB, generating the first membrane-bound Q intermediate 3-octaprenyl-4-hydroxybenzoate. The chain is 4-hydroxybenzoate octaprenyltransferase from Shewanella oneidensis (strain ATCC 700550 / JCM 31522 / CIP 106686 / LMG 19005 / NCIMB 14063 / MR-1).